A 249-amino-acid chain; its full sequence is Ubiquinone biosynthesis O-methyltransferase (249 aa).

The S-adenosyl-L-methionine site is built by Arg-41, Gly-72, Asp-93, and Met-136.

The protein belongs to the methyltransferase superfamily. UbiG/COQ3 family.

The catalysed reaction is a 3-demethylubiquinol + S-adenosyl-L-methionine = a ubiquinol + S-adenosyl-L-homocysteine + H(+). It carries out the reaction a 3-(all-trans-polyprenyl)benzene-1,2-diol + S-adenosyl-L-methionine = a 2-methoxy-6-(all-trans-polyprenyl)phenol + S-adenosyl-L-homocysteine + H(+). It participates in cofactor biosynthesis; ubiquinone biosynthesis. Its function is as follows. O-methyltransferase that catalyzes the 2 O-methylation steps in the ubiquinone biosynthetic pathway. This chain is Ubiquinone biosynthesis O-methyltransferase, found in Methylobacterium sp. (strain 4-46).